The sequence spans 1144 residues: Nitric oxide synthase, inducible (1144 aa).

A DINNN-motif; mediates interaction with SPSB1, SPSB2 and SPSB4 motif is present at residues D23–N27. The interval S37–A59 is disordered. Residues H47–A59 are compositionally biased toward polar residues. Positions 104 and 109 each coordinate Zn(2+). (6R)-L-erythro-5,6,7,8-tetrahydrobiopterin is bound at residue S112. C194 contacts heme b. The L-arginine site is built by Q257, W366, Y367, and E371. Positions 375, 456, 457, and 470 each coordinate (6R)-L-erythro-5,6,7,8-tetrahydrobiopterin. Residue Y485 participates in heme b binding. The interval F509–S529 is calmodulin-binding. The 139-residue stretch at A533–F671 folds into the Flavodoxin-like domain. Residues T539, E540, T541, K543, and S544 each contribute to the FMN site. Y569 is modified (phosphotyrosine). FMN contacts are provided by S585, T586, S622, C629, E655, and Q659. One can recognise an FAD-binding FR-type domain in the interval K724–P964. R744 provides a ligand contact to NADP(+). FAD is bound by residues H766, R900, Y902, S903, T918, and A920. An NADP(+)-binding site is contributed by T923. 4 residues coordinate FAD: Y924, V937, C938, and S939. 8 residues coordinate NADP(+): T978, R1011, S1040, R1041, K1047, Y1049, Q1051, and D1084.

This sequence belongs to the NOS family. As to quaternary structure, homodimer. Interacts with NHERF1. Interacts with GAPDH. Interacts with S100A8 and S100A9 to form the iNOS-S100A8/9 transnitrosylase complex. Interacts with SPSB1, SPSB2 and SPSB4. Interacts with ELOC and CUL5 in the presence of SPSB1 or SPSB2 or SPSB4. Forms a complex with ASL, ASS1 and HSP90AA1; the complex regulates cell-autonomous L-arginine synthesis and citrulline recycling while channeling extracellular L-arginine to nitric oxide synthesis pathway. Heme b serves as cofactor. The cofactor is FAD. Requires FMN as cofactor. It depends on (6R)-L-erythro-5,6,7,8-tetrahydrobiopterin as a cofactor. In terms of processing, polyubiquitinated; mediated by SPSB1, SPSB2 and SPSB4, leading to proteasomal degradation. In terms of tissue distribution, macrophages.

Its subcellular location is the cytoplasm. The protein resides in the cytosol. It carries out the reaction 2 L-arginine + 3 NADPH + 4 O2 + H(+) = 2 L-citrulline + 2 nitric oxide + 3 NADP(+) + 4 H2O. Not stimulated by calcium/calmodulin. Aspirin inhibits expression and function of this enzyme and effects may be exerted at the level of translational/post-translational modification and directly on the catalytic activity. In terms of biological role, produces nitric oxide (NO) which is a messenger molecule with diverse functions throughout the body. In macrophages, NO mediates tumoricidal and bactericidal actions. Also has nitrosylase activity and mediates cysteine S-nitrosylation of cytoplasmic target proteins such PTGS2/COX2. As component of the iNOS-S100A8/9 transnitrosylase complex involved in the selective inflammatory stimulus-dependent S-nitrosylation of GAPDH implicated in regulation of the GAIT complex activity and probably multiple targets including ANXA5, EZR, MSN and VIM. Involved in inflammation, enhances the synthesis of pro-inflammatory mediators such as IL6 and IL8. The polypeptide is Nitric oxide synthase, inducible (Nos2) (Mus musculus (Mouse)).